Reading from the N-terminus, the 427-residue chain is GTPase Obg (427 aa).

Residues 1-158 (MFVDIAKIYV…LWVILELKVL (158 aa)) enclose the Obg domain. One can recognise an OBG-type G domain in the interval 159–330 (ADVGLIGYPN…VLKRAYELLK (172 aa)). Residues 165-172 (GYPNVGKS), 190-194 (FTTKY), 212-215 (DIPG), 282-285 (NKMD), and 311-313 (SAA) contribute to the GTP site. Residues S172 and T192 each contribute to the Mg(2+) site. An OCT domain is found at 347 to 427 (FVYYKKKDVK…ILDVEFEYYE (81 aa)).

The protein belongs to the TRAFAC class OBG-HflX-like GTPase superfamily. OBG GTPase family. As to quaternary structure, monomer. Mg(2+) serves as cofactor.

Its subcellular location is the cytoplasm. In terms of biological role, an essential GTPase which binds GTP, GDP and possibly (p)ppGpp with moderate affinity, with high nucleotide exchange rates and a fairly low GTP hydrolysis rate. Plays a role in control of the cell cycle, stress response, ribosome biogenesis and in those bacteria that undergo differentiation, in morphogenesis control. This is GTPase Obg from Caldicellulosiruptor bescii (strain ATCC BAA-1888 / DSM 6725 / KCTC 15123 / Z-1320) (Anaerocellum thermophilum).